Consider the following 345-residue polypeptide: S-adenosylmethionine:tRNA ribosyltransferase-isomerase (345 aa).

The protein belongs to the QueA family. Monomer.

The protein localises to the cytoplasm. The enzyme catalyses 7-aminomethyl-7-carbaguanosine(34) in tRNA + S-adenosyl-L-methionine = epoxyqueuosine(34) in tRNA + adenine + L-methionine + 2 H(+). The protein operates within tRNA modification; tRNA-queuosine biosynthesis. Transfers and isomerizes the ribose moiety from AdoMet to the 7-aminomethyl group of 7-deazaguanine (preQ1-tRNA) to give epoxyqueuosine (oQ-tRNA). The sequence is that of S-adenosylmethionine:tRNA ribosyltransferase-isomerase from Shewanella woodyi (strain ATCC 51908 / MS32).